Reading from the N-terminus, the 245-residue chain is 8-amino-3,8-dideoxy-manno-octulosonate cytidylyltransferase (245 aa).

Belongs to the KdsB family.

It localises to the cytoplasm. The catalysed reaction is 8-amino-3,8-dideoxy-alpha-D-manno-octulosonate + CTP = CMP-8-amino-3,8-dideoxy-alpha-D-manno-oct-2-ulosonate + diphosphate. Its pathway is bacterial outer membrane biogenesis; lipopolysaccharide biosynthesis. Its function is as follows. Activates KDO8N (a required 8-carbon sugar) for incorporation into bacterial lipopolysaccharide in the Shewanella genus. The sequence is that of 8-amino-3,8-dideoxy-manno-octulosonate cytidylyltransferase from Shewanella baltica (strain OS185).